We begin with the raw amino-acid sequence, 510 residues long: Probable cytosol aminopeptidase (510 aa).

Residues Lys268 and Asp273 each contribute to the Mn(2+) site. The active site involves Lys280. 3 residues coordinate Mn(2+): Asp291, Asp350, and Glu352. Arg354 is a catalytic residue.

This sequence belongs to the peptidase M17 family. Requires Mn(2+) as cofactor.

Its subcellular location is the cytoplasm. The catalysed reaction is Release of an N-terminal amino acid, Xaa-|-Yaa-, in which Xaa is preferably Leu, but may be other amino acids including Pro although not Arg or Lys, and Yaa may be Pro. Amino acid amides and methyl esters are also readily hydrolyzed, but rates on arylamides are exceedingly low.. The enzyme catalyses Release of an N-terminal amino acid, preferentially leucine, but not glutamic or aspartic acids.. Presumably involved in the processing and regular turnover of intracellular proteins. Catalyzes the removal of unsubstituted N-terminal amino acids from various peptides. The protein is Probable cytosol aminopeptidase of Micrococcus luteus (strain ATCC 4698 / DSM 20030 / JCM 1464 / CCM 169 / CCUG 5858 / IAM 1056 / NBRC 3333 / NCIMB 9278 / NCTC 2665 / VKM Ac-2230) (Micrococcus lysodeikticus).